Reading from the N-terminus, the 358-residue chain is Peptide chain release factor 1 (358 aa).

Position 233 is an N5-methylglutamine (Q233).

It belongs to the prokaryotic/mitochondrial release factor family. Methylated by PrmC. Methylation increases the termination efficiency of RF1.

The protein resides in the cytoplasm. Functionally, peptide chain release factor 1 directs the termination of translation in response to the peptide chain termination codons UAG and UAA. The polypeptide is Peptide chain release factor 1 (Lachnoclostridium phytofermentans (strain ATCC 700394 / DSM 18823 / ISDg) (Clostridium phytofermentans)).